A 312-amino-acid polypeptide reads, in one-letter code: Olfactory receptor 867 (312 aa).

Residues 1–6 (MILNCN) are Extracellular-facing. A helical membrane pass occupies residues 7 to 30 (PFSGLFLSMYLVTVLGNLLIILAV). Residues 31–38 (SSNSHLHN) lie on the Cytoplasmic side of the membrane. The helical transmembrane segment at 39 to 60 (LMYFFLSNLSFVDICFISTTIP) threads the bilayer. Over 61-81 (KMLVNIHSQTKDISYIECLSQ) the chain is Extracellular. An intrachain disulfide couples C78 to C160. The helical transmembrane segment at 82 to 101 (VYFLTTFGGMDNFLLTLMAC) threads the bilayer. The Cytoplasmic segment spans residues 102–120 (DRYVAICHPLNYTVIMNLQ). The chain crosses the membrane as a helical span at residues 121–139 (LCALLILMFWLIMFCVSLI). Residues 140 to 177 (HVLLMNELNFSRGTEIPHFFCELAQVLKVANSDTHINN) lie on the Extracellular side of the membrane. An N-linked (GlcNAc...) asparagine glycan is attached at N148. The chain crosses the membrane as a helical span at residues 178–200 (VFMYVVTSLLGLIPMTGILMSYS). At 201-217 (QIASSLLKMSSSVSKYK) the chain is on the cytoplasmic side. A helical membrane pass occupies residues 218-241 (AFSTCGSHLCVVSLFYGSATIVYF). The Extracellular segment spans residues 242–253 (CSSVLHSTHKKM). A helical transmembrane segment spans residues 254 to 273 (IASLMYTVISPMLNPFIYSL). At 274 to 312 (RNKDVKGALGKLFIRVASCPLWSKDFRPKFILKPERQSL) the chain is on the cytoplasmic side.

This sequence belongs to the G-protein coupled receptor 1 family. As to expression, epithelium of the tongue; including the taste buds.

It localises to the cell membrane. Functionally, possible olfactory or taste receptor. This Rattus norvegicus (Rat) protein is Olfactory receptor 867 (Olr867).